A 133-amino-acid polypeptide reads, in one-letter code: Phosphoribosyl-AMP cyclohydrolase (133 aa).

Aspartate 82 lines the Mg(2+) pocket. Zn(2+) is bound at residue cysteine 83. Mg(2+) is bound by residues aspartate 84 and aspartate 86. Cysteine 99 and cysteine 106 together coordinate Zn(2+).

The protein belongs to the PRA-CH family. Homodimer. Mg(2+) is required as a cofactor. It depends on Zn(2+) as a cofactor.

It is found in the cytoplasm. It catalyses the reaction 1-(5-phospho-beta-D-ribosyl)-5'-AMP + H2O = 1-(5-phospho-beta-D-ribosyl)-5-[(5-phospho-beta-D-ribosylamino)methylideneamino]imidazole-4-carboxamide. Its pathway is amino-acid biosynthesis; L-histidine biosynthesis; L-histidine from 5-phospho-alpha-D-ribose 1-diphosphate: step 3/9. Catalyzes the hydrolysis of the adenine ring of phosphoribosyl-AMP. The protein is Phosphoribosyl-AMP cyclohydrolase of Rhodospirillum centenum (strain ATCC 51521 / SW).